The sequence spans 547 residues: Methionine--tRNA ligase (547 aa).

The 'HIGH' region signature appears at 15 to 25; that stretch reads PYANGSIHIGH. Zn(2+) is bound by residues Cys-146, Cys-149, Cys-159, and Cys-162. A 'KMSKS' region motif is present at residues 332–336; the sequence is KLSKS. Lys-335 lines the ATP pocket.

The protein belongs to the class-I aminoacyl-tRNA synthetase family. MetG type 1 subfamily. Monomer. Zn(2+) serves as cofactor.

It localises to the cytoplasm. The catalysed reaction is tRNA(Met) + L-methionine + ATP = L-methionyl-tRNA(Met) + AMP + diphosphate. In terms of biological role, is required not only for elongation of protein synthesis but also for the initiation of all mRNA translation through initiator tRNA(fMet) aminoacylation. The chain is Methionine--tRNA ligase (metG) from Buchnera aphidicola subsp. Acyrthosiphon pisum (strain APS) (Acyrthosiphon pisum symbiotic bacterium).